We begin with the raw amino-acid sequence, 338 residues long: Flap endonuclease 1 (338 aa).

Residues 1–98 (MGVNLSSILI…ETLRERSLIK (98 aa)) are N-domain. The Mg(2+) site is built by aspartate 27, aspartate 80, glutamate 152, glutamate 154, aspartate 173, aspartate 175, and aspartate 236. The segment at 116–257 (KIRSLSSRIN…TALSLIKKYN (142 aa)) is I-domain. Residues 330–338 (HQSSLDRFF) form an interaction with PCNA region.

The protein belongs to the XPG/RAD2 endonuclease family. FEN1 subfamily. Interacts with PCNA. PCNA stimulates the nuclease activity without altering cleavage specificity. The cofactor is Mg(2+).

Structure-specific nuclease with 5'-flap endonuclease and 5'-3' exonuclease activities involved in DNA replication and repair. During DNA replication, cleaves the 5'-overhanging flap structure that is generated by displacement synthesis when DNA polymerase encounters the 5'-end of a downstream Okazaki fragment. Binds the unpaired 3'-DNA end and kinks the DNA to facilitate 5' cleavage specificity. Cleaves one nucleotide into the double-stranded DNA from the junction in flap DNA, leaving a nick for ligation. Also involved in the base excision repair (BER) pathway. Acts as a genome stabilization factor that prevents flaps from equilibrating into structures that lead to duplications and deletions. Also possesses 5'-3' exonuclease activity on nicked or gapped double-stranded DNA. The polypeptide is Flap endonuclease 1 (Picrophilus torridus (strain ATCC 700027 / DSM 9790 / JCM 10055 / NBRC 100828 / KAW 2/3)).